The chain runs to 133 residues: Profilin (133 aa).

The protein belongs to the profilin family. In terms of assembly, occurs in many kinds of cells as a complex with monomeric actin in a 1:1 ratio.

The protein localises to the cytoplasm. It localises to the cytoskeleton. In terms of biological role, binds to actin and affects the structure of the cytoskeleton. At high concentrations, profilin prevents the polymerization of actin, whereas it enhances it at low concentrations. By binding to PIP2, it inhibits the formation of IP3 and DG. The protein is Profilin of Mercurialis annua (Annual mercury).